A 208-amino-acid polypeptide reads, in one-letter code: Methylthioribulose-1-phosphate dehydratase (208 aa).

Zn(2+)-binding residues include histidine 98 and histidine 100.

Belongs to the aldolase class II family. MtnB subfamily. The cofactor is Zn(2+).

It carries out the reaction 5-(methylsulfanyl)-D-ribulose 1-phosphate = 5-methylsulfanyl-2,3-dioxopentyl phosphate + H2O. The protein operates within amino-acid biosynthesis; L-methionine biosynthesis via salvage pathway; L-methionine from S-methyl-5-thio-alpha-D-ribose 1-phosphate: step 2/6. Its function is as follows. Catalyzes the dehydration of methylthioribulose-1-phosphate (MTRu-1-P) into 2,3-diketo-5-methylthiopentyl-1-phosphate (DK-MTP-1-P). This is Methylthioribulose-1-phosphate dehydratase from Hahella chejuensis (strain KCTC 2396).